We begin with the raw amino-acid sequence, 119 residues long: MTNTKKILHNALYYVLIIIYEYVLLLVHCLRYFFEFLFLFLPLWLVFFFLMLSLNNLSRSYSSSPSSWLPVNSLSLASLFSSSFCSPSSNFLFLEPLSSELSPKVFLPLITPSGFRSSL.

A run of 2 helical transmembrane segments spans residues 7–27 and 32–52; these read ILHN…LLLV and YFFE…FLML.

The protein resides in the membrane. This is an uncharacterized protein from Saccharomyces cerevisiae (strain ATCC 204508 / S288c) (Baker's yeast).